Here is a 142-residue protein sequence, read N- to C-terminus: Large ribosomal subunit protein uL13c (142 aa).

It belongs to the universal ribosomal protein uL13 family. In terms of assembly, part of the 50S ribosomal subunit.

The protein localises to the plastid. Its subcellular location is the chloroplast. This chain is Large ribosomal subunit protein uL13c, found in Pyropia yezoensis (Susabi-nori).